An 80-amino-acid chain; its full sequence is uncharacterized protein (80 aa).

This is an uncharacterized protein from Vaccinia virus (strain Western Reserve) (VACV).